The sequence spans 188 residues: Adenylate kinase (188 aa).

10–15 provides a ligand contact to ATP; sequence GCGKGT. The segment at 30 to 59 is NMP; that stretch reads STGDMLRHARAAGTELGRRVAAIMDGGNLV. Residues Thr31, Arg36, 57–59, 85–88, and Gln92 contribute to the AMP site; these read NLV and GFPR. The segment at 126 to 136 is LID; the sequence is KRAEEEGRPDD. Arg127 contributes to the ATP binding site. Positions 133 and 144 each coordinate AMP. ATP is bound at residue Gly172.

The protein belongs to the adenylate kinase family. Monomer.

Its subcellular location is the cytoplasm. It carries out the reaction AMP + ATP = 2 ADP. Its pathway is purine metabolism; AMP biosynthesis via salvage pathway; AMP from ADP: step 1/1. Functionally, catalyzes the reversible transfer of the terminal phosphate group between ATP and AMP. Plays an important role in cellular energy homeostasis and in adenine nucleotide metabolism. In Maricaulis maris (strain MCS10) (Caulobacter maris), this protein is Adenylate kinase.